The following is a 1728-amino-acid chain: Hybrid PKS-NRPS synthetase TAS1 (1728 aa).

Positions 153 to 499 are condensation (C) domain; sequence SPLSKAQMAL…MDPTLLDFKV (347 aa). The tract at residues 608–1002 is adenylation (A) domain; that stretch reads KARAASQPDL…KLHIQGRIGN (395 aa). Residues 1141-1219 enclose the Carrier domain; the sequence is MLRRHLTAEV…KQVDCLMGIV (79 aa). Ser1177 is subject to O-(pantetheine 4'-phosphoryl)serine. The segment at 1225-1256 is disordered; the sequence is LGSEPTGGSSSRSQSRRSAETSSSSTSAPSSV. Low complexity-rich tracts occupy residues 1226–1237 and 1244–1255; these read GSEPTGGSSSRS and ETSSSSTSAPSS. One can recognise a Ketosynthase family 3 (KS3) domain in the interval 1262 to 1714; that stretch reads RNLYAIVGIS…SDATWFVIST (453 aa). Residues Cys1436, His1579, and Asn1633 each act as for beta-ketoacyl synthase activity in the active site.

This sequence in the N-terminal section; belongs to the NRP synthetase family. Pantetheine 4'-phosphate is required as a cofactor.

It catalyses the reaction acetoacetyl-CoA + L-isoleucine + ATP = tenuazonic acid + AMP + diphosphate + CoA + 2 H(+). Hybrid PKS-NRPS synthetase that mediates the biosynthesis of the toxin tenuazonic acid (TeA), an inhibitor of protein biosynthesis on ribosomes by suppressing the release of new protein. TAS1 alone is sufficient for TeA synthesis via the condensation of isoleucine (Ile) with acetoacetyl-CoA by the N-terminal NRPS module and subsequent cyclization conducted by the C-terminal KS domain. This is Hybrid PKS-NRPS synthetase TAS1 from Pyricularia oryzae (strain 70-15 / ATCC MYA-4617 / FGSC 8958) (Rice blast fungus).